Consider the following 348-residue polypeptide: NADH-ubiquinone oxidoreductase chain 2 (348 aa).

The next 11 membrane-spanning stretches (helical) occupy residues 3 to 23 (PYVL…TFAS), 25 to 45 (HWLL…RLMA), 60 to 80 (FLTQ…NAWA), 99 to 119 (MMAL…PEVL), 122 to 142 (LDLT…FALI), 150 to 170 (NPML…WGGL), 178 to 196 (ILAY…ILQY), 200 to 219 (LTLI…FLSL), 246 to 266 (LTLL…KWLI), 274 to 294 (DLPA…YFYL), and 328 to 348 (LMMI…ALFF).

This sequence belongs to the complex I subunit 2 family.

It is found in the mitochondrion inner membrane. It catalyses the reaction a ubiquinone + NADH + 5 H(+)(in) = a ubiquinol + NAD(+) + 4 H(+)(out). Its function is as follows. Core subunit of the mitochondrial membrane respiratory chain NADH dehydrogenase (Complex I) that is believed to belong to the minimal assembly required for catalysis. Complex I functions in the transfer of electrons from NADH to the respiratory chain. The immediate electron acceptor for the enzyme is believed to be ubiquinone. The polypeptide is NADH-ubiquinone oxidoreductase chain 2 (MT-ND2) (Formosania lacustris (Oriental stream loach)).